The sequence spans 507 residues: Histidine ammonia-lyase (507 aa).

A cross-link (5-imidazolinone (Ala-Gly)) is located at residues 141 to 143 (ASG). At Ser-142 the chain carries 2,3-didehydroalanine (Ser).

The protein belongs to the PAL/histidase family. Contains an active site 4-methylidene-imidazol-5-one (MIO), which is formed autocatalytically by cyclization and dehydration of residues Ala-Ser-Gly.

It is found in the cytoplasm. It carries out the reaction L-histidine = trans-urocanate + NH4(+). Its pathway is amino-acid degradation; L-histidine degradation into L-glutamate; N-formimidoyl-L-glutamate from L-histidine: step 1/3. The sequence is that of Histidine ammonia-lyase from Burkholderia ambifaria (strain ATCC BAA-244 / DSM 16087 / CCUG 44356 / LMG 19182 / AMMD) (Burkholderia cepacia (strain AMMD)).